The following is a 485-amino-acid chain: NADH-quinone oxidoreductase subunit N (485 aa).

The next 14 membrane-spanning stretches (helical) occupy residues 8 to 28 (LIAL…MLSI), 35 to 55 (FLNA…LWFV), 71 to 91 (GFAM…CTFA), 105 to 125 (FYLL…ANHL), 127 to 147 (SLFL…GYAF), 159 to 179 (YTIL…LVYA), 203 to 223 (LLAG…LVPF), 235 to 255 (PAPV…GVVM), 271 to 291 (VVLA…ALSQ), 297 to 317 (LLGY…IALQ), 326 to 346 (VGVY…VVSL), 373 to 393 (AAVM…LGFI), 408 to 430 (WWLV…RVAV), and 455 to 475 (IVVL…QPLI).

This sequence belongs to the complex I subunit 2 family. As to quaternary structure, NDH-1 is composed of 13 different subunits. Subunits NuoA, H, J, K, L, M, N constitute the membrane sector of the complex.

The protein resides in the cell inner membrane. It carries out the reaction a quinone + NADH + 5 H(+)(in) = a quinol + NAD(+) + 4 H(+)(out). Its function is as follows. NDH-1 shuttles electrons from NADH, via FMN and iron-sulfur (Fe-S) centers, to quinones in the respiratory chain. The immediate electron acceptor for the enzyme in this species is believed to be ubiquinone. Couples the redox reaction to proton translocation (for every two electrons transferred, four hydrogen ions are translocated across the cytoplasmic membrane), and thus conserves the redox energy in a proton gradient. The protein is NADH-quinone oxidoreductase subunit N of Escherichia coli (strain ATCC 8739 / DSM 1576 / NBRC 3972 / NCIMB 8545 / WDCM 00012 / Crooks).